The chain runs to 144 residues: 3-hydroxyacyl-[acyl-carrier-protein] dehydratase FabZ (144 aa).

His52 is an active-site residue.

Belongs to the thioester dehydratase family. FabZ subfamily.

It is found in the cytoplasm. It carries out the reaction a (3R)-hydroxyacyl-[ACP] = a (2E)-enoyl-[ACP] + H2O. Functionally, involved in unsaturated fatty acids biosynthesis. Catalyzes the dehydration of short chain beta-hydroxyacyl-ACPs and long chain saturated and unsaturated beta-hydroxyacyl-ACPs. The polypeptide is 3-hydroxyacyl-[acyl-carrier-protein] dehydratase FabZ (Syntrophomonas wolfei subsp. wolfei (strain DSM 2245B / Goettingen)).